The primary structure comprises 296 residues: 4-hydroxybenzoate octaprenyltransferase (296 aa).

8 helical membrane-spanning segments follow: residues 28-48 (IGTL…SDGI), 51-71 (LAVL…GCVI), 102-122 (LLLT…LNHL), 143-163 (FFPI…PMAF), 174-194 (AWIL…VYAM), 212-232 (FGRY…LLMA), 233-253 (VLGA…IVLL), and 274-294 (FLAN…HTFF).

It belongs to the UbiA prenyltransferase family. Mg(2+) is required as a cofactor.

The protein resides in the cell inner membrane. It catalyses the reaction all-trans-octaprenyl diphosphate + 4-hydroxybenzoate = 4-hydroxy-3-(all-trans-octaprenyl)benzoate + diphosphate. Its pathway is cofactor biosynthesis; ubiquinone biosynthesis. Catalyzes the prenylation of para-hydroxybenzoate (PHB) with an all-trans polyprenyl group. Mediates the second step in the final reaction sequence of ubiquinone-8 (UQ-8) biosynthesis, which is the condensation of the polyisoprenoid side chain with PHB, generating the first membrane-bound Q intermediate 3-octaprenyl-4-hydroxybenzoate. The polypeptide is 4-hydroxybenzoate octaprenyltransferase (Neisseria meningitidis serogroup B (strain ATCC BAA-335 / MC58)).